The primary structure comprises 755 residues: Beta-galactosidase (755 aa).

The active-site Proton donor is the Glu-382. The active-site Nucleophile is the Glu-463.

The protein belongs to the glycosyl hydrolase 2 family.

It catalyses the reaction Hydrolysis of terminal non-reducing beta-D-galactose residues in beta-D-galactosides.. This Rhizobium meliloti (Ensifer meliloti) protein is Beta-galactosidase (lacZ).